Here is a 72-residue protein sequence, read N- to C-terminus: Translation initiation factor IF-1 (72 aa).

Positions 1 to 72 (MAKEEVLEFP…TKGRITYRFK (72 aa)) constitute an S1-like domain.

This sequence belongs to the IF-1 family. In terms of assembly, component of the 30S ribosomal translation pre-initiation complex which assembles on the 30S ribosome in the order IF-2 and IF-3, IF-1 and N-formylmethionyl-tRNA(fMet); mRNA recruitment can occur at any time during PIC assembly.

It localises to the cytoplasm. In terms of biological role, one of the essential components for the initiation of protein synthesis. Stabilizes the binding of IF-2 and IF-3 on the 30S subunit to which N-formylmethionyl-tRNA(fMet) subsequently binds. Helps modulate mRNA selection, yielding the 30S pre-initiation complex (PIC). Upon addition of the 50S ribosomal subunit IF-1, IF-2 and IF-3 are released leaving the mature 70S translation initiation complex. This chain is Translation initiation factor IF-1, found in Sinorhizobium medicae (strain WSM419) (Ensifer medicae).